Reading from the N-terminus, the 79-residue chain is Serine protease inhibitor Kazal-type 1 (79 aa).

The signal sequence occupies residues 1–23; it reads MKVTGIFLLSALALLSLSGNTGA. Positions 26–79 constitute a Kazal-like domain; sequence LGREAKCYNELNGCTKIYDPVCGTDGNTYPNECVLCFENRKRQTSILIQKSGPC. Disulfide bonds link C32/C61, C39/C58, and C47/C79.

It is found in the secreted. Serine protease inhibitor which exhibits anti-trypsin activity. In the pancreas, protects against trypsin-catalyzed premature activation of zymogens. In terms of biological role, in the male reproductive tract, binds to sperm heads where it modulates sperm capacitance by inhibiting calcium uptake and nitrogen oxide (NO) production. This Homo sapiens (Human) protein is Serine protease inhibitor Kazal-type 1 (SPINK1).